A 438-amino-acid chain; its full sequence is Thymidine phosphorylase (438 aa).

This sequence belongs to the thymidine/pyrimidine-nucleoside phosphorylase family. As to quaternary structure, homodimer.

The enzyme catalyses thymidine + phosphate = 2-deoxy-alpha-D-ribose 1-phosphate + thymine. The protein operates within pyrimidine metabolism; dTMP biosynthesis via salvage pathway; dTMP from thymine: step 1/2. Functionally, the enzymes which catalyze the reversible phosphorolysis of pyrimidine nucleosides are involved in the degradation of these compounds and in their utilization as carbon and energy sources, or in the rescue of pyrimidine bases for nucleotide synthesis. This is Thymidine phosphorylase from Burkholderia cenocepacia (strain ATCC BAA-245 / DSM 16553 / LMG 16656 / NCTC 13227 / J2315 / CF5610) (Burkholderia cepacia (strain J2315)).